We begin with the raw amino-acid sequence, 578 residues long: Maltogenic alpha-amylase (578 aa).

It belongs to the glycosyl hydrolase 13 family.

The catalysed reaction is hydrolysis of (1-&gt;4)-alpha-D-glucosidic linkages in polysaccharides so as to remove successive alpha-maltose residues from the non-reducing ends of the chains.. Converts starch into maltose. In contrary to other maltogenic alpha-amylases BlmA cannot hydrolyze 1,4-alpha-glucosidic linkage next to 1,6-alpha-glucosidic linkages. In Bacillus licheniformis, this protein is Maltogenic alpha-amylase (blmA).